The chain runs to 1487 residues: Chromosome partition protein MukB (1487 aa).

Position 34–41 (34–41 (GGNGAGKS)) interacts with ATP. 5 coiled-coil regions span residues 297-426 (SSRE…LEKA), 460-666 (ALKH…RLAS), 781-806 (RAAREQRLELLRSEREEVVEKHAKAA), 836-1111 (EQAL…RTFV), and 1210-1266 (VEAI…LSNI). The interval 667-784 (PGGSNDPRLK…VIPLFGRAAR (118 aa)) is flexible hinge.

The protein belongs to the SMC family. MukB subfamily. As to quaternary structure, homodimerization via its hinge domain. Binds to DNA via its C-terminal region. Interacts, and probably forms a ternary complex, with MukE and MukF via its C-terminal region. The complex formation is stimulated by calcium or magnesium. Interacts with tubulin-related protein FtsZ.

The protein resides in the cytoplasm. Its subcellular location is the nucleoid. Its function is as follows. Plays a central role in chromosome condensation, segregation and cell cycle progression. Functions as a homodimer, which is essential for chromosome partition. Involved in negative DNA supercoiling in vivo, and by this means organize and compact chromosomes. May achieve or facilitate chromosome segregation by condensation DNA from both sides of a centrally located replisome during cell division. This Vibrio vulnificus (strain CMCP6) protein is Chromosome partition protein MukB.